The primary structure comprises 395 residues: Cystathionine beta-lyase (395 aa).

K210 carries the post-translational modification N6-(pyridoxal phosphate)lysine.

The protein belongs to the trans-sulfuration enzymes family. As to quaternary structure, homotetramer. The cofactor is pyridoxal 5'-phosphate.

It is found in the cytoplasm. The enzyme catalyses L,L-cystathionine + H2O = L-homocysteine + pyruvate + NH4(+). It catalyses the reaction an S-substituted L-cysteine + H2O = a thiol + pyruvate + NH4(+). It functions in the pathway amino-acid biosynthesis; L-methionine biosynthesis via de novo pathway; L-homocysteine from L-cystathionine: step 1/1. Functionally, catalyzes the cleavage of cystathionine to homocysteine, pyruvate and ammonia during methionine biosynthesis. The protein is Cystathionine beta-lyase (metC) of Salmonella typhimurium (strain LT2 / SGSC1412 / ATCC 700720).